Here is a 657-residue protein sequence, read N- to C-terminus: Glycogen debranching enzyme (657 aa).

The Nucleophile role is filled by D336. E371 functions as the Proton donor in the catalytic mechanism. Residues 458–467 show a composition bias toward basic and acidic residues; that stretch reads NEANGEENRD. The disordered stretch occupies residues 458-479; that stretch reads NEANGEENRDGTNNNYSNNHGK.

This sequence belongs to the glycosyl hydrolase 13 family.

The enzyme catalyses Hydrolysis of (1-&gt;6)-alpha-D-glucosidic linkages to branches with degrees of polymerization of three or four glucose residues in limit dextrin.. It functions in the pathway glycan degradation; glycogen degradation. Its function is as follows. Removes maltotriose and maltotetraose chains that are attached by 1,6-alpha-linkage to the limit dextrin main chain, generating a debranched limit dextrin. The polypeptide is Glycogen debranching enzyme (Escherichia coli O139:H28 (strain E24377A / ETEC)).